A 392-amino-acid chain; its full sequence is MIDEKDKSYLEEKVKQASNILPQKIVEDLKNLISNKEVLVTRDEIDKIFDLAIKEYSEGLIAPGEAIGIVAAQSVGEPGTQMTLRTFHFAGIRELNVTLGLPRLIEIVDAKKVPSTPMMTIYLTDEYKHDKEKALEVARKLEYTKIENVVSSTSIDIASMSIILQLDNEMLKDKGVTVDDVKKAINRLKLGEFVIDESEGNTLNISFANIDSIAALFKLRDKILNTKIKGIKGIKRAIVQKKGDEYIILTDGSNLSGVLSVKGVDIAKVETNNIREIEEVFGIEAAREIIIREISKVLAEQGLDVDMRHILLVADVMTRTGVVRQIGRHGVTGEKNSVLARAAFEVTVKHLLDAAARGDVEEFKGVVENIIIGHPIKLGTGMVELTMRPILR.

The protein belongs to the RNA polymerase beta' chain family. As to quaternary structure, part of the RNA polymerase complex.

It is found in the cytoplasm. The enzyme catalyses RNA(n) + a ribonucleoside 5'-triphosphate = RNA(n+1) + diphosphate. DNA-dependent RNA polymerase (RNAP) catalyzes the transcription of DNA into RNA using the four ribonucleoside triphosphates as substrates. Forms part of the jaw domain. The sequence is that of DNA-directed RNA polymerase subunit Rpo1C from Saccharolobus islandicus (strain Y.N.15.51 / Yellowstone #2) (Sulfolobus islandicus).